A 40-amino-acid polypeptide reads, in one-letter code: Alpha-conotoxin GIC (40 aa).

The propeptide occupies 1-20 (SDGRNDAAKAFDLISSTVKK). 2 disulfide bridges follow: C22/C28 and C23/C36. The tract at residues 24 to 26 (SHP) is ser-Xaa-Pro motif, crucial for potent interaction with nAChR. At C36 the chain carries Cysteine amide.

Expressed by the venom duct.

It localises to the secreted. Alpha-conotoxins bind to the nicotinic acetylcholine receptors (nAChR) and inhibit them. This toxin reversibly blocks neuronal nAChRs (alpha-3/beta-2 = alpha-6 or -3/beta-2 or -3 &gt; alpha-3/beta-4 = alpha-4/beta-2). The protein is Alpha-conotoxin GIC of Conus geographus (Geography cone).